The chain runs to 464 residues: Adenylyltransferase and sulfurtransferase MOCS3 (464 aa).

ATP contacts are provided by residues G101, D122, 129–133 (NNMHR), K146, and 190–191 (DN). Residues C231 and C234 each contribute to the Zn(2+) site. The active-site Glycyl thioester intermediate; for adenylyltransferase activity is C248. Positions 306 and 309 each coordinate Zn(2+). The region spanning 358–462 (KKEQHVLLDV…WAANVNPNFP (105 aa)) is the Rhodanese domain. C422 (cysteine persulfide intermediate; for sulfurtransferase activity) is an active-site residue.

In the N-terminal section; belongs to the HesA/MoeB/ThiF family. UBA4 subfamily. Zn(2+) serves as cofactor.

The protein localises to the cytoplasm. It catalyses the reaction [molybdopterin-synthase sulfur-carrier protein]-C-terminal Gly-Gly + ATP + H(+) = [molybdopterin-synthase sulfur-carrier protein]-C-terminal Gly-Gly-AMP + diphosphate. The catalysed reaction is [molybdopterin-synthase sulfur-carrier protein]-C-terminal Gly-Gly-AMP + S-sulfanyl-L-cysteinyl-[cysteine desulfurase] + AH2 = [molybdopterin-synthase sulfur-carrier protein]-C-terminal-Gly-aminoethanethioate + L-cysteinyl-[cysteine desulfurase] + A + AMP + 2 H(+). It participates in tRNA modification; 5-methoxycarbonylmethyl-2-thiouridine-tRNA biosynthesis. The protein operates within cofactor biosynthesis; molybdopterin biosynthesis. Functionally, plays a central role in 2-thiolation of mcm(5)S(2)U at tRNA wobble positions of cytosolic tRNA(Lys), tRNA(Glu) and tRNA(Gln). Also essential during biosynthesis of the molybdenum cofactor. Acts by mediating the C-terminal thiocarboxylation of sulfur carriers URM1 and MOCS2A. Its N-terminus first activates URM1 and MOCS2A as acyl-adenylates (-COAMP), then the persulfide sulfur on the catalytic cysteine is transferred to URM1 and MOCS2A to form thiocarboxylation (-COSH) of their C-terminus. The reaction probably involves hydrogen sulfide that is generated from the persulfide intermediate and that acts as a nucleophile towards URM1 and MOCS2A. Subsequently, a transient disulfide bond is formed. Does not use thiosulfate as sulfur donor; NFS1 probably acting as a sulfur donor for thiocarboxylation reactions. The chain is Adenylyltransferase and sulfurtransferase MOCS3 from Arabidopsis thaliana (Mouse-ear cress).